The following is a 220-amino-acid chain: Adapter protein MecA (220 aa).

This sequence belongs to the MecA family. In terms of assembly, homodimer.

In terms of biological role, enables the recognition and targeting of unfolded and aggregated proteins to the ClpC protease or to other proteins involved in proteolysis. This chain is Adapter protein MecA, found in Enterococcus faecalis (strain ATCC 700802 / V583).